Reading from the N-terminus, the 878-residue chain is Phosphoenolpyruvate carboxylase (878 aa).

Residues histidine 137 and lysine 545 contribute to the active site.

This sequence belongs to the PEPCase type 1 family. It depends on Mg(2+) as a cofactor.

The catalysed reaction is oxaloacetate + phosphate = phosphoenolpyruvate + hydrogencarbonate. Functionally, forms oxaloacetate, a four-carbon dicarboxylic acid source for the tricarboxylic acid cycle. The protein is Phosphoenolpyruvate carboxylase of Proteus mirabilis (strain HI4320).